We begin with the raw amino-acid sequence, 317 residues long: Zinc metalloproteinase/disintegrin (317 aa).

The propeptide occupies 1–26; the sequence is EAPKMCGVTQNWESYEPIKKASQSNL. Residues 32–228 form the Peptidase M12B domain; the sequence is RYIELVIVAD…QKPQCILNKP (197 aa). Glu-35 and Asp-119 together coordinate Ca(2+). Intrachain disulfides connect Cys-143–Cys-223, Cys-183–Cys-207, and Cys-185–Cys-190. Position 168 (His-168) interacts with Zn(2+). Glu-169 is an active-site residue. Zn(2+)-binding residues include His-172 and His-178. Residues Cys-223 and Asn-226 each coordinate Ca(2+). The propeptide occupies 229–244; sequence LRTDTVSTPVSGNELL. The Disintegrin domain maps to 236–317; it reads TPVSGNELLE…AGCPRNPFHA (82 aa). Cystine bridges form between Cys-250-Cys-259, Cys-252-Cys-260, Cys-265-Cys-279, Cys-273-Cys-303, Cys-278-Cys-282, and Cys-291-Cys-310. The short motif at 295–297 is the Cell attachment site element; sequence RGD.

This sequence belongs to the venom metalloproteinase (M12B) family. P-II subfamily. P-IIa sub-subfamily. As to quaternary structure, monomer. The cofactor is Zn(2+). As to expression, expressed by the venom gland.

It localises to the secreted. In terms of biological role, metalloproteinase that impairs hemostasis in the envenomed animal. Functionally, inhibits GPIIb/GPIIIa (ITGA2B/ITGB3) binding to immobilized fibrinogen with an IC(50) of 2.2 nM and ADP-induced platelet aggregation with an IC(50) of 131 nM, respectively. Inhibits angiogenesis. By binding to vitronectin receptor (alpha-V/beta-3 (ITGAV/ITGB3)), also induces apoptosis of endothelial cells by blocking their attachment to extracellular matrix proteins. Inhibits platelet aggregation induced by ADP (IC(50) is 30 nM), collagen (IC(50) is 500 nM), thrombin and epinephrin (IC(50) is 160 nM). This Gloydius brevicauda (Korean slamosa snake) protein is Zinc metalloproteinase/disintegrin.